The sequence spans 246 residues: Aquaporin AqpM (246 aa).

The Cytoplasmic segment spans residues 1-11 (MVSLTKRCIAE). Residues 12–32 (FIGTFILVFFGAGSAAVTLMI) form a helical membrane-spanning segment. At 33-55 (ASGGTSPNPFNIGIGLLGGLGDW) the chain is on the extracellular side. The chain crosses the membrane as a helical span at residues 56–76 (VAIGLAFGFAIAASIYALGNI). Topologically, residues 77–103 (SGCHINPAVTIGLWSVKKFPGREVVPY) are cytoplasmic. The short motif at 82-84 (NPA) is the NPA 1 element. Residues 104–124 (IIAQLLGAAFGSFIFLQCAGI) traverse the membrane as a helical segment. Topologically, residues 125–145 (GAATVGGLGATAPFPGISYWQ) are extracellular. Residues 146-166 (AMLAEVVGTFLLMITIMGIAV) form a helical membrane-spanning segment. Residues 167–172 (DERAPK) are Cytoplasmic-facing. A helical membrane pass occupies residues 173–193 (GFAGIIIGLTVAGIITTLGNI). The Extracellular segment spans residues 194-217 (SGSSLNPARTFGPYLNDMIFAGTN). An NPA 2 motif is present at residues 199–201 (NPA). Residues 218–238 (LWNYYPIYVIGPIVGAVLAAL) traverse the membrane as a helical segment. The Cytoplasmic portion of the chain corresponds to 239–246 (TYQYLTSE).

The protein belongs to the MIP/aquaporin (TC 1.A.8) family. Homotetramer.

The protein resides in the cell membrane. Channel that permits osmotically driven movement of water in both directions. It mediates rapid entry or exit of water in response to abrupt changes in osmolarity. Also exhibits a transient but reproducible increase in the initial glycerol flux. The sequence is that of Aquaporin AqpM (aqpM) from Methanothermobacter marburgensis (strain ATCC BAA-927 / DSM 2133 / JCM 14651 / NBRC 100331 / OCM 82 / Marburg) (Methanobacterium thermoautotrophicum).